We begin with the raw amino-acid sequence, 120 residues long: Large ribosomal subunit protein bL21 (120 aa).

It belongs to the bacterial ribosomal protein bL21 family. As to quaternary structure, part of the 50S ribosomal subunit. Contacts protein L20.

This protein binds to 23S rRNA in the presence of protein L20. In Roseiflexus castenholzii (strain DSM 13941 / HLO8), this protein is Large ribosomal subunit protein bL21.